Reading from the N-terminus, the 152-residue chain is Transcriptional regulator MraZ (152 aa).

2 consecutive SpoVT-AbrB domains span residues 5–52 (ATLV…PLPE) and 81–124 (ASEC…DETT).

The protein belongs to the MraZ family. In terms of assembly, forms oligomers.

Its subcellular location is the cytoplasm. The protein localises to the nucleoid. Its function is as follows. Negatively regulates its own expression and that of the subsequent genes in the proximal part of the division and cell wall (dcw) gene cluster. Acts by binding directly to DNA. May also regulate the expression of genes outside the dcw cluster. In Salmonella gallinarum (strain 287/91 / NCTC 13346), this protein is Transcriptional regulator MraZ.